The sequence spans 187 residues: MNLQHHFLIAMPALQDPIFRRSVVYICEHNTNGAMGIIVNKPLENLKIEGILEKLKITPEPRDESIRLDKPVMLGGPLAEDRGFILHTPPSNFASSIRISDNTVMTTSRDVLETLGTDKQPSDVLVALGYASWEKGQLEQEILDNAWLTASADLNILFKTPIADRWREAAKLIGVDILTMPGVAGHA.

The protein belongs to the UPF0301 (AlgH) family.

This Shigella boydii serotype 4 (strain Sb227) protein is UPF0301 protein YqgE.